A 477-amino-acid polypeptide reads, in one-letter code: Proton extrusion protein PxcA (477 aa).

3 consecutive transmembrane segments (helical) span residues 239–259 (FILL…ITFV), 354–374 (GIKN…IIST), and 437–457 (FNFL…KYWI).

Belongs to the CemA family.

It localises to the cell inner membrane. In terms of biological role, required for H(+) efflux immediately after light irradiation to form a rapid H(+) concentration gradient across the thylakoid membranes. Together with PxcL, contributes to transient H(+) uptake following dark to light transition. The polypeptide is Proton extrusion protein PxcA (Trichodesmium erythraeum (strain IMS101)).